Consider the following 1202-residue polypeptide: Voltage-gated inwardly rectifying potassium channel KCNH6 (1202 aa).

Residues 1–405 lie on the Cytoplasmic side of the membrane; it reads MGSAALPHAR…YSPFKAVWDW (405 aa). Residues 36 to 84 form the PAS domain; sequence IIYCNDGFCEMFGYSRVEVMQRPCTCDFLTGPDTTKSSIAQLTQALLGS. A PAC domain is found at 87–139; sequence CKLEILYYRKDTSCFRCLVDVVPVKNEDGVVIMFILNFEDLAQLIAKSSGRSL. Disordered stretches follow at residues 203–243 and 285–315; these read ENCV…LGPR and ERRA…SDSD. The span at 213-222 shows a compositional bias: basic and acidic residues; sequence LLEKERRPSL. The helical transmembrane segment at 406-426 threads the bilayer; it reads LILLLVIYTAVFTPYSAAFLL. The Extracellular portion of the chain corresponds to 427–443; sequence NEEQGEEKHWNCSYSCD. The N-linked (GlcNAc...) asparagine glycan is linked to N437. Residues 444 to 464 traverse the membrane as a helical segment; it reads PLNIIDLIVDIMFIVDIVINF. The Cytoplasmic segment spans residues 465 to 485; it reads RTTYVNINDEVVSHPGKIAIH. Residues 486 to 506 traverse the membrane as a helical segment; sequence YFKGWFLIDMVAAIPFDLLIF. Residues 507–515 lie on the Extracellular side of the membrane; sequence RSGSDETTT. Residues 516–536 traverse the membrane as a helical; Voltage-sensor segment; the sequence is LIGLLKTARLLRLVRVARKLD. Topologically, residues 537-543 are cytoplasmic; it reads RYSEYGA. The chain crosses the membrane as a helical span at residues 544–564; that stretch reads AVLFLLMCTFALIAHWLACIW. At 565–608 the chain is on the extracellular side; that stretch reads YAIGNVERPYMEHKIGWLDNLGDQIGKRYNDSDLSSGPSIKDKY. A glycan (N-linked (GlcNAc...) asparagine) is linked at N594. The segment at residues 609–629 is an intramembrane region (pore-forming); sequence VTALYFTFSSLTSVGFGNVSP. The short motif at 621 to 626 is the Selectivity filter element; sequence SVGFGN. At 630-635 the chain is on the extracellular side; that stretch reads NTNSEK. A helical membrane pass occupies residues 636-656; the sequence is IFSICVMLIGSLMYASIFGNV. Topologically, residues 657–1202 are cytoplasmic; sequence SAIIQRLYSG…HLSDPVLPGS (546 aa). The tract at residues 739-839 is cNMP-binding domain; sequence AFRGASKGCL…IQREDLLEVL (101 aa). Disordered regions lie at residues 912–948, 1092–1112, and 1140–1202; these read LTNP…GSPT, TPCA…PSYA, and TVYS…LPGS. Over residues 928–937 the composition is skewed to polar residues; sequence GSSTTPCSQT. Residues 1179–1195 show a composition bias toward basic and acidic residues; it reads EHLEASSEHQDIQRHLS.

Belongs to the potassium channel family. H (Eag) (TC 1.A.1.20) subfamily. Kv11.2/KCNH6 sub-subfamily. The potassium channel is probably composed of a homo- or heterotetrameric complex of pore-forming alpha subunits that can associate only within their subfamily.

The protein resides in the cell membrane. It catalyses the reaction K(+)(in) = K(+)(out). In terms of biological role, pore-forming (alpha) subunit of voltage-gated inwardly rectifying potassium channel. Characterized by unusual gating kinetics by producing relatively small outward currents during membrane depolarization and large inward currents during subsequent repolarization which reflect a rapid inactivation during depolarization and quick recovery from inactivation but slow deactivation (closing) during repolarization. Activates even more slowly than KCNH2. The sequence is that of Voltage-gated inwardly rectifying potassium channel KCNH6 from Gallus gallus (Chicken).